The following is a 521-amino-acid chain: 7-deoxyloganic acid hydroxylase (521 aa).

A helical membrane pass occupies residues 8–28; that stretch reads IIFLVFVSLTLYWVYRILDWV. Residues Asn107 and Asn311 are each glycosylated (N-linked (GlcNAc...) asparagine). Cys469 serves as a coordination point for heme.

Belongs to the cytochrome P450 family. Mostly present in actively growing aerial organs, including leaves, flower buds and stems, and, to a lower extent, in mature leaves, roots and opened flowers. Expressed in the leaf internal phloem-associated parenchyma (IPAP) inside the mesophyll.

The protein localises to the endoplasmic reticulum membrane. It carries out the reaction 7-deoxyloganate + reduced [NADPH--hemoprotein reductase] + O2 = loganate + oxidized [NADPH--hemoprotein reductase] + H2O + H(+). The protein operates within alkaloid biosynthesis. Component of the seco-iridoid and derivatives monoterpenoid indole alkaloids (MIAs, e.g. vincristine, quinine, and strychnine) biosynthesis pathway. Catalyzes the conversion of 7-deoxyloganic acid into loganic acid. Not active on 7-deoxyloganetic acid. The polypeptide is 7-deoxyloganic acid hydroxylase (Catharanthus roseus (Madagascar periwinkle)).